The following is a 213-amino-acid chain: Protein-L-isoaspartate O-methyltransferase (213 aa).

The active site involves S64.

The protein belongs to the methyltransferase superfamily. L-isoaspartyl/D-aspartyl protein methyltransferase family.

It is found in the cytoplasm. It catalyses the reaction [protein]-L-isoaspartate + S-adenosyl-L-methionine = [protein]-L-isoaspartate alpha-methyl ester + S-adenosyl-L-homocysteine. Functionally, catalyzes the methyl esterification of L-isoaspartyl residues in peptides and proteins that result from spontaneous decomposition of normal L-aspartyl and L-asparaginyl residues. It plays a role in the repair and/or degradation of damaged proteins. The chain is Protein-L-isoaspartate O-methyltransferase from Flavobacterium johnsoniae (strain ATCC 17061 / DSM 2064 / JCM 8514 / BCRC 14874 / CCUG 350202 / NBRC 14942 / NCIMB 11054 / UW101) (Cytophaga johnsonae).